The sequence spans 608 residues: Albumin (608 aa).

The signal sequence occupies residues 1–18; sequence MKWVTFLLLLFISGSAFS. A propeptide spanning residues 19-24 is cleaved from the precursor; it reads RGVFRR. Albumin domains lie at 19 to 211, 212 to 403, and 404 to 601; these read RGVF…AVKE, KALV…EFQP, and LVEE…NLVA. Histidine 27 provides a ligand contact to Cu cation. Phosphoserine is present on serine 29. Ca(2+)-binding residues include glutamate 30 and aspartate 37. The cysteines at positions 77 and 86 are disulfide-linked. Phosphoserine is present on serine 89. Histidine 91 lines the Zn(2+) pocket. 6 disulfides stabilise this stretch: cysteine 99-cysteine 115, cysteine 114-cysteine 125, cysteine 148-cysteine 193, cysteine 192-cysteine 201, cysteine 224-cysteine 270, and cysteine 269-cysteine 277. Glutamate 268 serves as a coordination point for Ca(2+). Histidine 271 and aspartate 273 together coordinate Zn(2+). 3 residues coordinate Ca(2+): aspartate 273, glutamate 276, and aspartate 279. 8 cysteine pairs are disulfide-bonded: cysteine 289-cysteine 303, cysteine 302-cysteine 313, cysteine 340-cysteine 385, cysteine 384-cysteine 393, cysteine 416-cysteine 462, cysteine 461-cysteine 472, cysteine 485-cysteine 501, and cysteine 500-cysteine 511. A Phosphoserine modification is found at serine 297. Serine 443 carries the post-translational modification Phosphoserine. Residues threonine 444 and threonine 446 each carry the phosphothreonine modification. Residue lysine 460 is modified to N6-succinyllysine. Serine 513 is modified (phosphoserine). Intrachain disulfides connect cysteine 538/cysteine 583 and cysteine 582/cysteine 591. An N6-succinyllysine modification is found at lysine 543. An N6-methyllysine modification is found at lysine 558. Threonine 570 bears the Phosphothreonine mark. At lysine 588 the chain carries N6-succinyllysine.

This sequence belongs to the ALB/AFP/VDB family. In terms of assembly, interacts with FCGRT; this interaction regulates ALB homeostasis. Interacts with TASOR. In plasma, occurs in a covalently-linked complex with chromophore-bound alpha-1-microglobulin; this interaction does not prevent fatty acid binding to ALB. Phosphorylated by FAM20C in the extracellular medium. In terms of tissue distribution, plasma.

The protein resides in the secreted. Its function is as follows. Binds water, Ca(2+), Na(+), K(+), fatty acids, hormones, bilirubin and drugs. Its main function is the regulation of the colloidal osmotic pressure of blood. Major zinc transporter in plasma, typically binds about 80% of all plasma zinc. Major calcium and magnesium transporter in plasma, binds approximately 45% of circulating calcium and magnesium in plasma. Potentially has more than two calcium-binding sites and might additionally bind calcium in a non-specific manner. The shared binding site between zinc and calcium at residue Asp-273 suggests a crosstalk between zinc and calcium transport in the blood. The rank order of affinity is zinc &gt; calcium &gt; magnesium. Binds to the bacterial siderophore enterobactin and inhibits enterobactin-mediated iron uptake of E.coli from ferric transferrin, and may thereby limit the utilization of iron and growth of enteric bacteria such as E.coli. Does not prevent iron uptake by the bacterial siderophore aerobactin. This is Albumin (Alb) from Rattus norvegicus (Rat).